The chain runs to 400 residues: Enoyl-[acyl-carrier-protein] reductase [NADH] (400 aa).

Residues 48 to 53, 74 to 75, 111 to 112, and 139 to 140 contribute to the NAD(+) site; these read GSSSGY, FE, DA, and LA. Tyrosine 225 provides a ligand contact to substrate. The active-site Proton donor is tyrosine 235. NAD(+)-binding positions include lysine 244 and 273-275; that span reads VVT.

Belongs to the TER reductase family. In terms of assembly, monomer.

The catalysed reaction is a 2,3-saturated acyl-[ACP] + NAD(+) = a (2E)-enoyl-[ACP] + NADH + H(+). It functions in the pathway lipid metabolism; fatty acid biosynthesis. Involved in the final reduction of the elongation cycle of fatty acid synthesis (FAS II). Catalyzes the reduction of a carbon-carbon double bond in an enoyl moiety that is covalently linked to an acyl carrier protein (ACP). The polypeptide is Enoyl-[acyl-carrier-protein] reductase [NADH] (Shewanella piezotolerans (strain WP3 / JCM 13877)).